We begin with the raw amino-acid sequence, 435 residues long: Tol-Pal system protein TolB (435 aa).

The first 20 residues, 1–20 (MRKIIAGVFIFVFLISNLYA), serve as a signal peptide directing secretion.

It belongs to the TolB family. In terms of assembly, the Tol-Pal system is composed of five core proteins: the inner membrane proteins TolA, TolQ and TolR, the periplasmic protein TolB and the outer membrane protein Pal. They form a network linking the inner and outer membranes and the peptidoglycan layer.

The protein resides in the periplasm. In terms of biological role, part of the Tol-Pal system, which plays a role in outer membrane invagination during cell division and is important for maintaining outer membrane integrity. The protein is Tol-Pal system protein TolB of Francisella tularensis subsp. holarctica (strain LVS).